The following is a 291-amino-acid chain: Urease accessory protein UreD (291 aa).

It belongs to the UreD family. In terms of assembly, ureD, UreF and UreG form a complex that acts as a GTP-hydrolysis-dependent molecular chaperone, activating the urease apoprotein by helping to assemble the nickel containing metallocenter of UreC. The UreE protein probably delivers the nickel.

It localises to the cytoplasm. Its function is as follows. Required for maturation of urease via the functional incorporation of the urease nickel metallocenter. This is Urease accessory protein UreD from Acinetobacter baumannii (strain SDF).